Here is an 89-residue protein sequence, read N- to C-terminus: UPF0223 protein BCA_4066 (89 aa).

Belongs to the UPF0223 family.

This Bacillus cereus (strain 03BB102) protein is UPF0223 protein BCA_4066.